The chain runs to 297 residues: UDP-N-acetylenolpyruvoylglucosamine reductase (297 aa).

The FAD-binding PCMH-type domain occupies 27–191 (TGGNADIFVM…LDATFSLELE (165 aa)). R170 is an active-site residue. Catalysis depends on S220, which acts as the Proton donor. Residue E290 is part of the active site.

It belongs to the MurB family. FAD is required as a cofactor.

Its subcellular location is the cytoplasm. The catalysed reaction is UDP-N-acetyl-alpha-D-muramate + NADP(+) = UDP-N-acetyl-3-O-(1-carboxyvinyl)-alpha-D-glucosamine + NADPH + H(+). It functions in the pathway cell wall biogenesis; peptidoglycan biosynthesis. Its function is as follows. Cell wall formation. The protein is UDP-N-acetylenolpyruvoylglucosamine reductase of Listeria welshimeri serovar 6b (strain ATCC 35897 / DSM 20650 / CCUG 15529 / CIP 8149 / NCTC 11857 / SLCC 5334 / V8).